A 233-amino-acid chain; its full sequence is Purine nucleoside phosphorylase DeoD-type (233 aa).

A purine D-ribonucleoside is bound at residue His-4. Residues Gly-20, Arg-24, Arg-43, and 87 to 90 each bind phosphate; that span reads RIGT. A purine D-ribonucleoside contacts are provided by residues 179 to 181 and 203 to 204; these read EME and SD. Residue Asp-204 is the Proton donor of the active site.

Belongs to the PNP/UDP phosphorylase family. As to quaternary structure, homohexamer; trimer of homodimers.

The enzyme catalyses a purine D-ribonucleoside + phosphate = a purine nucleobase + alpha-D-ribose 1-phosphate. The catalysed reaction is a purine 2'-deoxy-D-ribonucleoside + phosphate = a purine nucleobase + 2-deoxy-alpha-D-ribose 1-phosphate. Its function is as follows. Catalyzes the reversible phosphorolytic breakdown of the N-glycosidic bond in the beta-(deoxy)ribonucleoside molecules, with the formation of the corresponding free purine bases and pentose-1-phosphate. The sequence is that of Purine nucleoside phosphorylase DeoD-type from Helicobacter acinonychis (strain Sheeba).